A 207-amino-acid polypeptide reads, in one-letter code: Outer-membrane lipoprotein LolB (207 aa).

The first 21 residues, 1-21, serve as a signal peptide directing secretion; sequence MPMRKRHFYRLLPLASLLLAA. Residue C22 is the site of N-palmitoyl cysteine attachment. Residue C22 is the site of S-diacylglycerol cysteine attachment.

It belongs to the LolB family. Monomer.

The protein localises to the cell outer membrane. Plays a critical role in the incorporation of lipoproteins in the outer membrane after they are released by the LolA protein. This is Outer-membrane lipoprotein LolB from Yersinia pseudotuberculosis serotype IB (strain PB1/+).